Reading from the N-terminus, the 151-residue chain is 6,7-dimethyl-8-ribityllumazine synthase (151 aa).

5-amino-6-(D-ribitylamino)uracil-binding positions include Phe-23, 55 to 57 (AYE), and 79 to 81 (AVI). Residue 84–85 (AT) participates in (2S)-2-hydroxy-3-oxobutyl phosphate binding. The active-site Proton donor is His-87. Phe-111 contacts 5-amino-6-(D-ribitylamino)uracil. Arg-125 is a binding site for (2S)-2-hydroxy-3-oxobutyl phosphate.

It belongs to the DMRL synthase family.

It catalyses the reaction (2S)-2-hydroxy-3-oxobutyl phosphate + 5-amino-6-(D-ribitylamino)uracil = 6,7-dimethyl-8-(1-D-ribityl)lumazine + phosphate + 2 H2O + H(+). It participates in cofactor biosynthesis; riboflavin biosynthesis; riboflavin from 2-hydroxy-3-oxobutyl phosphate and 5-amino-6-(D-ribitylamino)uracil: step 1/2. In terms of biological role, catalyzes the formation of 6,7-dimethyl-8-ribityllumazine by condensation of 5-amino-6-(D-ribitylamino)uracil with 3,4-dihydroxy-2-butanone 4-phosphate. This is the penultimate step in the biosynthesis of riboflavin. The protein is 6,7-dimethyl-8-ribityllumazine synthase of Leptospira interrogans serogroup Icterohaemorrhagiae serovar copenhageni (strain Fiocruz L1-130).